The following is a 465-amino-acid chain: Siroheme synthase (465 aa).

Residues 1-203 form a precorrin-2 dehydrogenase /sirohydrochlorin ferrochelatase region; it reads MEYLPLFHNL…GRTAEAERLL (203 aa). NAD(+) contacts are provided by residues 22–23 and 43–44; these read EI and PS. Serine 128 bears the Phosphoserine mark. A uroporphyrinogen-III C-methyltransferase region spans residues 216 to 465; sequence GEVYLVGAGP…WFEGAQAAGR (250 aa). Proline 225 is an S-adenosyl-L-methionine binding site. Aspartate 248 acts as the Proton acceptor in catalysis. The active-site Proton donor is lysine 270. S-adenosyl-L-methionine is bound by residues 301 to 303, isoleucine 306, 331 to 332, methionine 383, and glycine 412; these read GGD and TA.

It in the N-terminal section; belongs to the precorrin-2 dehydrogenase / sirohydrochlorin ferrochelatase family. In the C-terminal section; belongs to the precorrin methyltransferase family.

The catalysed reaction is uroporphyrinogen III + 2 S-adenosyl-L-methionine = precorrin-2 + 2 S-adenosyl-L-homocysteine + H(+). It catalyses the reaction precorrin-2 + NAD(+) = sirohydrochlorin + NADH + 2 H(+). The enzyme catalyses siroheme + 2 H(+) = sirohydrochlorin + Fe(2+). Its pathway is cofactor biosynthesis; adenosylcobalamin biosynthesis; precorrin-2 from uroporphyrinogen III: step 1/1. The protein operates within cofactor biosynthesis; adenosylcobalamin biosynthesis; sirohydrochlorin from precorrin-2: step 1/1. It functions in the pathway porphyrin-containing compound metabolism; siroheme biosynthesis; precorrin-2 from uroporphyrinogen III: step 1/1. It participates in porphyrin-containing compound metabolism; siroheme biosynthesis; siroheme from sirohydrochlorin: step 1/1. Its pathway is porphyrin-containing compound metabolism; siroheme biosynthesis; sirohydrochlorin from precorrin-2: step 1/1. In terms of biological role, multifunctional enzyme that catalyzes the SAM-dependent methylations of uroporphyrinogen III at position C-2 and C-7 to form precorrin-2 via precorrin-1. Then it catalyzes the NAD-dependent ring dehydrogenation of precorrin-2 to yield sirohydrochlorin. Finally, it catalyzes the ferrochelation of sirohydrochlorin to yield siroheme. This is Siroheme synthase from Stutzerimonas stutzeri (strain A1501) (Pseudomonas stutzeri).